Reading from the N-terminus, the 505-residue chain is Deoxyguanosinetriphosphate triphosphohydrolase (505 aa).

In terms of domain architecture, HD spans 66–273 (RLTHSLEVQQ…MEAADDISYC (208 aa)).

Belongs to the dGTPase family. Type 1 subfamily. Homotetramer. Mg(2+) is required as a cofactor.

It carries out the reaction dGTP + H2O = 2'-deoxyguanosine + triphosphate + H(+). Its function is as follows. dGTPase preferentially hydrolyzes dGTP over the other canonical NTPs. The protein is Deoxyguanosinetriphosphate triphosphohydrolase of Escherichia fergusonii (strain ATCC 35469 / DSM 13698 / CCUG 18766 / IAM 14443 / JCM 21226 / LMG 7866 / NBRC 102419 / NCTC 12128 / CDC 0568-73).